An 837-amino-acid polypeptide reads, in one-letter code: Anaphase-promoting complex subunit 2 (837 aa).

Residues Ser-233, Ser-329, Ser-485, Ser-549, and Ser-712 each carry the phosphoserine modification. The segment at 478–508 (CLETGQDSEDDSGEPEDWVPDPVDADPVKSS) is disordered. Residues 483-496 (QDSEDDSGEPEDWV) are compositionally biased toward acidic residues. A Phosphotyrosine modification is found at Tyr-825.

It belongs to the cullin family. As to quaternary structure, the mammalian APC/C is composed at least of 14 distinct subunits ANAPC1, ANAPC2, CDC27/APC3, ANAPC4, ANAPC5, CDC16/APC6, ANAPC7, CDC23/APC8, ANAPC10, ANAPC11, CDC26/APC12, ANAPC13, ANAPC15 and ANAPC16 that assemble into a complex of at least 19 chains with a combined molecular mass of around 1.2 MDa; APC/C interacts with FZR1 and FBXO5. In the context of the APC/C complex, directly interacts with UBE2C and UBE2S. Interacts (via cullin domain) with ANAPC11 and with UBCH10. Interacts with NEUROD2. Interacts with FBXO43; the interaction is direct.

It participates in protein modification; protein ubiquitination. Together with the RING-H2 protein ANAPC11, constitutes the catalytic component of the anaphase promoting complex/cyclosome (APC/C), a cell cycle-regulated E3 ubiquitin ligase that controls progression through mitosis and the G1 phase of the cell cycle. The APC/C complex acts by mediating ubiquitination and subsequent degradation of target proteins: it mainly mediates the formation of 'Lys-11'-linked polyubiquitin chains and, to a lower extent, the formation of 'Lys-48'- and 'Lys-63'-linked polyubiquitin chains. The APC/C complex catalyzes assembly of branched 'Lys-11'-/'Lys-48'-linked branched ubiquitin chains on target proteins. The CDC20-APC/C complex positively regulates the formation of synaptic vesicle clustering at active zone to the presynaptic membrane in postmitotic neurons. CDC20-APC/C-induced degradation of NEUROD2 drives presynaptic differentiation. The chain is Anaphase-promoting complex subunit 2 (Anapc2) from Mus musculus (Mouse).